The following is a 315-amino-acid chain: Aspartate carbamoyltransferase catalytic subunit (315 aa).

2 residues coordinate carbamoyl phosphate: Arg-64 and Thr-65. Lys-92 is a binding site for L-aspartate. Residues Arg-114, His-142, and Gln-145 each coordinate carbamoyl phosphate. Positions 175 and 229 each coordinate L-aspartate. The carbamoyl phosphate site is built by Gly-270 and Pro-271.

It belongs to the aspartate/ornithine carbamoyltransferase superfamily. ATCase family. In terms of assembly, heterododecamer (2C3:3R2) of six catalytic PyrB chains organized as two trimers (C3), and six regulatory PyrI chains organized as three dimers (R2).

The catalysed reaction is carbamoyl phosphate + L-aspartate = N-carbamoyl-L-aspartate + phosphate + H(+). It functions in the pathway pyrimidine metabolism; UMP biosynthesis via de novo pathway; (S)-dihydroorotate from bicarbonate: step 2/3. Catalyzes the condensation of carbamoyl phosphate and aspartate to form carbamoyl aspartate and inorganic phosphate, the committed step in the de novo pyrimidine nucleotide biosynthesis pathway. The sequence is that of Aspartate carbamoyltransferase catalytic subunit from Methylorubrum populi (strain ATCC BAA-705 / NCIMB 13946 / BJ001) (Methylobacterium populi).